The following is a 326-amino-acid chain: tRNA(Ile)-lysidine synthase (326 aa).

33-38 (SGGPDS) serves as a coordination point for ATP.

This sequence belongs to the tRNA(Ile)-lysidine synthase family.

It localises to the cytoplasm. It catalyses the reaction cytidine(34) in tRNA(Ile2) + L-lysine + ATP = lysidine(34) in tRNA(Ile2) + AMP + diphosphate + H(+). Its function is as follows. Ligates lysine onto the cytidine present at position 34 of the AUA codon-specific tRNA(Ile) that contains the anticodon CAU, in an ATP-dependent manner. Cytidine is converted to lysidine, thus changing the amino acid specificity of the tRNA from methionine to isoleucine. This Novosphingobium aromaticivorans (strain ATCC 700278 / DSM 12444 / CCUG 56034 / CIP 105152 / NBRC 16084 / F199) protein is tRNA(Ile)-lysidine synthase.